The chain runs to 364 residues: Anthranilate phosphoribosyltransferase (364 aa).

5-phospho-alpha-D-ribose 1-diphosphate is bound by residues Gly101, Gly104–Asp105, Thr109, Asn111–Thr114, Lys129–Ser137, and Gly141. Residue Gly101 coordinates anthranilate. A Mg(2+)-binding site is contributed by Ser113. Asn132 is a binding site for anthranilate. Arg187 serves as a coordination point for anthranilate. 2 residues coordinate Mg(2+): Asp245 and Glu246.

This sequence belongs to the anthranilate phosphoribosyltransferase family. Homodimer. Mg(2+) serves as cofactor.

The catalysed reaction is N-(5-phospho-beta-D-ribosyl)anthranilate + diphosphate = 5-phospho-alpha-D-ribose 1-diphosphate + anthranilate. The protein operates within amino-acid biosynthesis; L-tryptophan biosynthesis; L-tryptophan from chorismate: step 2/5. In terms of biological role, catalyzes the transfer of the phosphoribosyl group of 5-phosphorylribose-1-pyrophosphate (PRPP) to anthranilate to yield N-(5'-phosphoribosyl)-anthranilate (PRA). The polypeptide is Anthranilate phosphoribosyltransferase (Mycolicibacterium gilvum (strain PYR-GCK) (Mycobacterium gilvum (strain PYR-GCK))).